Consider the following 718-residue polypeptide: MSSDNIKVIVRCRPLNARETRENALNIIRMDEASAQVIVDPPEQEKSATQAKKVPRTFTFDAVYDQTSCNYGIFQASFKPLIDAVLEGFNSTIFAYGQTGAGKTWTMGGNKEEPGAIPNSFKHLFDAINSSSSNQNFLVIGSYLELYNEEIRDLIKNNTKLPLKEDKTRGIYVDGLSMHRVTTAAELSALMDKGFANRHVAATQMNDTSSRSHSIFMVRIECSEVIENKEVIRVGKLNLVDLAGSERQSKTGATGETLVEGAKINLSLSALGLVISKLVEGATHIPYRDSKLTRLLQDSLGGNSKTLMCANISPASTNYDETMSTLRYADRAKQIKNKPRINEDPKDAQIRQLRDHIARLEAQLAEAQANGAKPMDVLRIGKSLMKAINGDELNLDGTFQGTAGAKLSEARDGDSEGESTEEEIVFVEDEASRKAADELEAKRRALAEAKQKRESELEQKEALNKEAIVTLTDLKSQLSAIKNSVFVVKQLEIKDKVLGKAQQKLTTRQEKHNALQQALQNKQTEHQTKTAEILSAVEKLERLKADISKTEAEINEVNQEIDDITEQHALSIEEERRELKEVDKRSALLDAIIQTFIPQCEVAKAEALAEYDEETMKWAISPEKVDREHQMLLKRVRHMQILYPSGSTKPVFFGKGKDTRALVNFSQLSGNILELEPELPERMTVGEEMDGYQSYGMNEDEMHDTQLQMFYSQIDTYE.

A Kinesin motor domain is found at 5–335; sequence NIKVIVRCRP…LRYADRAKQI (331 aa). 97–104 contacts ATP; it reads GQTGAGKT. Residues glycine 100, glycine 102, lysine 103, threonine 104, and tryptophan 105 each contribute to the ADP site. Threonine 104 provides a ligand contact to Mg(2+). Positions 432–477 form a coiled coil; that stretch reads SRKAADELEAKRRALAEAKQKRESELEQKEALNKEAIVTLTDLKSQ.

Belongs to the TRAFAC class myosin-kinesin ATPase superfamily. Kinesin family. Kinesin II subfamily. In terms of assembly, monomer.

Its subcellular location is the cell projection. It localises to the cilium. It is found in the flagellum. The protein localises to the cytoplasm. The protein resides in the cytoskeleton. Its subcellular location is the flagellum axoneme. It localises to the flagellum basal body. Involved in anterograde intraflagellar transport (IFT). Involved in flagellar assembly. This chain is Kinesin-2a, found in Giardia intestinalis (strain ATCC 50803 / WB clone C6) (Giardia lamblia).